We begin with the raw amino-acid sequence, 224 residues long: Ethylene-inducing xylanase 5 (224 aa).

The first 16 residues, 1–16 (MLKSLVVLLLTSRVIA), serve as a signal peptide directing secretion. In terms of domain architecture, GH11 spans 32 to 218 (QATPNSQGTH…SSGFAEMTVA (187 aa)). Asn-88 is a glycosylation site (N-linked (GlcNAc...) asparagine). The active-site Nucleophile is the Glu-117. Glu-205 acts as the Proton donor in catalysis.

The protein belongs to the glycosyl hydrolase 11 (cellulase G) family.

It catalyses the reaction Endohydrolysis of (1-&gt;4)-beta-D-xylosidic linkages in xylans.. It functions in the pathway glycan degradation; xylan degradation. Functionally, endo-1,4-beta-xylanase involved in the hydrolysis of xylan, a major structural heterogeneous polysaccharide found in plant biomass representing the second most abundant polysaccharide in the biosphere, after cellulose. May act as an elicitor of plant defense responses in certain plants but does not exhibit any cell death when transiently expressed in N.benthamiana. In Verticillium dahliae (strain VdLs.17 / ATCC MYA-4575 / FGSC 10137) (Verticillium wilt), this protein is Ethylene-inducing xylanase 5.